Consider the following 243-residue polypeptide: Probable heat shock transcription factor (243 aa).

The DNA-binding element occupies 9–102 (INKFIRRLYK…GDNLLPCIQR (94 aa)). Positions 121 to 164 (QLQDLLQYLNNQNFKLEGEIKSLKDRVDQQDCTINGLVQLLTRI) are involved in trimerization.

Belongs to the HSF family. Homotrimer. Homotrimerization increases the affinity of HSF1 to DNA.

It localises to the nucleus. Functionally, DNA-binding transcription factor that specifically binds heat shock promoter elements (HSE) and activates transcription. The sequence is that of Probable heat shock transcription factor from Vairimorpha ceranae (strain BRL01) (Microsporidian parasite).